Here is a 423-residue protein sequence, read N- to C-terminus: Large ribosomal subunit protein mL37 (423 aa).

A mitochondrion-targeting transit peptide spans 1-29 (MALASGPALRALAGSGRLGLGGYGTPKRG).

The protein belongs to the mitochondrion-specific ribosomal protein mL37 family. As to quaternary structure, component of the mitochondrial ribosome large subunit (39S) which comprises a 16S rRNA and about 50 distinct proteins.

It is found in the mitochondrion. This chain is Large ribosomal subunit protein mL37 (Mrpl37), found in Mus musculus (Mouse).